The following is a 356-amino-acid chain: S-adenosylmethionine:tRNA ribosyltransferase-isomerase (356 aa).

Belongs to the QueA family. In terms of assembly, monomer.

The protein localises to the cytoplasm. It carries out the reaction 7-aminomethyl-7-carbaguanosine(34) in tRNA + S-adenosyl-L-methionine = epoxyqueuosine(34) in tRNA + adenine + L-methionine + 2 H(+). The protein operates within tRNA modification; tRNA-queuosine biosynthesis. In terms of biological role, transfers and isomerizes the ribose moiety from AdoMet to the 7-aminomethyl group of 7-deazaguanine (preQ1-tRNA) to give epoxyqueuosine (oQ-tRNA). In Xanthomonas axonopodis pv. citri (strain 306), this protein is S-adenosylmethionine:tRNA ribosyltransferase-isomerase.